A 293-amino-acid chain; its full sequence is MNKDLKGLYAALLVPFDENGQVNEQGLKQIAQNAIETEELDGLYVNGSSGENFLLNTEQKKQVFKVAKEAVGDKVKLIAQVGSLDLNEAIELGKYATELGYDALSAVTPFYYPFTFEEIRDYYFDIIEATQNNMIIYAIPDLTGVNISIEQFSELFNHEKIVGVKYTAPNFFLLERIRKAFPDKLILSGFDEMLVQATISGVDGAIGSTYNVNGRRARKIFDLARQGQIQEAYQLQHDSNDIIETVLSMGIYPTLKEILRHRDIDAGLPKRPFKPFNEAHRQTLDQLIAKYDL.

Residues Ser-48 and Ser-49 each contribute to the aceneuramate site. Tyr-137 serves as the catalytic Proton donor. Lys-165 serves as the catalytic Schiff-base intermediate with substrate. Aceneuramate-binding residues include Thr-167, Gly-189, Asp-191, Glu-192, and Ser-208.

The protein belongs to the DapA family. NanA subfamily. In terms of assembly, homotetramer.

It localises to the cytoplasm. It catalyses the reaction aceneuramate = aldehydo-N-acetyl-D-mannosamine + pyruvate. It functions in the pathway amino-sugar metabolism; N-acetylneuraminate degradation; D-fructose 6-phosphate from N-acetylneuraminate: step 1/5. Its function is as follows. Catalyzes the reversible aldol cleavage of N-acetylneuraminic acid (sialic acid; Neu5Ac) to form pyruvate and N-acetylmannosamine (ManNAc) via a Schiff base intermediate. The chain is N-acetylneuraminate lyase from Staphylococcus aureus (strain Mu3 / ATCC 700698).